A 758-amino-acid polypeptide reads, in one-letter code: Dolichyl-phosphooligosaccharide-protein glycotransferase 2 (758 aa).

At 1–6 (MKRRYS) the chain is on the cytoplasmic side. Residues 7–27 (ILIILLVAIFYRMITFRFKYL) traverse the membrane as a helical segment. The Extracellular portion of the chain corresponds to 28–92 (LGYDPYFHLA…KVFGVSLTTT (65 aa)). The DXD motif 1 motif lies at 29 to 31 (GYD). Asp31 lines the Mn(2+) pocket. The helical transmembrane segment at 93 to 113 (FKITPVIFGVLTVIFLYLSLL) threads the bilayer. Over 114 to 120 (KLYDEKR) the chain is Cytoplasmic. A helical membrane pass occupies residues 121–141 (AFFGGFFLAISYGHVFRSMAN). Over 142–145 (YYRG) the chain is Extracellular. Mn(2+)-binding residues include Arg144 and Asp146. The DXD motif 2 signature appears at 144–146 (RGD). Residues 146 to 166 (DNYMLFWYSVALLGISLALGI) form a helical membrane-spanning segment. Over 167-175 (KKGKWKYKR) the chain is Cytoplasmic. A run of 2 helical transmembrane segments spans residues 176–196 (LIFYTLPVLASGFSAIFWQAY) and 197–217 (YPIFAFLLSNALLLAVGAFIL). Over 218–226 (KKDKYLLDS) the chain is Cytoplasmic. The helical transmembrane segment at 227-247 (IILILSTAFGVLLANYLGGIF) threads the bilayer. Over 248–281 (GYGMLGYAKWLGKSVAKKLGLEFGYLKDVYLILH) the chain is Extracellular. A helical membrane pass occupies residues 282–302 (LKYLVPISLSFVLVLILLGFL). At 303–310 (TKDIRIRS) the chain is on the cytoplasmic side. Residues 311 to 331 (LFLGIASFIGIIILFKRFEAL) traverse the membrane as a helical segment. Residues 332 to 352 (KELSTGFGIFKEAPILETQPT) lie on the Extracellular side of the membrane. A TIXE motif motif is present at residues 340 to 343 (IFKE). The helical transmembrane segment at 353–373 (SFKDLWAAFSLSFFLTPLFFI) threads the bilayer. Residues 374-379 (RFKKPR) are Cytoplasmic-facing. A helical transmembrane segment spans residues 380–400 (VEDFLTLGLIIPSVYMLKTWT). A topological domain (extracellular) is located at residue Arg401. An a glycophospholipid-binding site is contributed by Arg401. The helical transmembrane segment at 402-422 (FLFIGSMAIAIMSGIGIVELY) threads the bilayer. The Cytoplasmic segment spans residues 423–433 (EAIKPRLNGKK). The helical transmembrane segment at 434–454 (ALATGIITLVILPGVIAGLSF) threads the bilayer. The Extracellular portion of the chain corresponds to 455-758 (KEVCSLHPEM…DRGVFRLSYN (304 aa)). Residues 488–490 (WWD) are interacts with target acceptor peptide in protein substrate. Positions 488 to 492 (WWDWG) match the WWDYG motif motif. A DK motif motif is present at residues 540–547 (DFLKFGAI).

It belongs to the STT3 family. It depends on Mn(2+) as a cofactor. The cofactor is Mg(2+).

The protein resides in the cell membrane. It carries out the reaction an archaeal dolichyl phosphooligosaccharide + [protein]-L-asparagine = an archaeal dolichyl phosphate + a glycoprotein with the oligosaccharide chain attached by N-beta-D-glycosyl linkage to a protein L-asparagine.. It functions in the pathway protein modification; protein glycosylation. Oligosaccharyl transferase (OST) that catalyzes the initial transfer of a defined glycan (ManNAcXyl(2)GlcAMan(2)GalNAc in Pyrococcus) from the lipid carrier dolichol-monophosphate to an asparagine residue within an Asn-X-Ser/Thr consensus motif in nascent polypeptide chains, the first step in protein N-glycosylation. The protein is Dolichyl-phosphooligosaccharide-protein glycotransferase 2 (aglB2) of Pyrococcus horikoshii (strain ATCC 700860 / DSM 12428 / JCM 9974 / NBRC 100139 / OT-3).